The following is a 636-amino-acid chain: MSSETLEFQAEARQLLQLMVHSIYSNKDVFLRELISNASDALDKLRLASLRDKDLDVDTADLHIAIEIDPDARTLTVRDNGIGMSRDEVVQVIGTIAKSGTAELLRTLRESADAETSQELIGQFGVGFYAAFMVADRVVLVTREAGATDGTRWESSGEGTYTIASATDAPQGTAVTLHLKPADSEDNLHDYATEWTVRQIVKRYSDFIAHPIRMAVEQPGTDGGESTTEVQTLNSMKALWARSRDEVEPAEYHEFYKHVSHDWADPLEVVHMRGEGTFEYEALLFLPTHAPLDLFSPQGRRGVQLYVKRVFIMDDCEALMPGYLRFVKGVVDAHDLSLNISRELLQQDRQIQVVRRRLVKKILATVKELKANQPEKYRTFWTEFGAVVKEGLIDDTENRDSLLEILSVASTHDPAEPTDLADYVTRMKDGQTDIYYATGENRSTIENSPHMEAFRAKGFEVLLLTDPVDEVWVERVGEYEGKTLRSVAKGQVDLDTEEERSAAEAERERQRTEYADLLTWLSSTLADQVREVRLSARLTTSPACVVGDAHDVTPTLEKMYRAMGHEVPQVKRILELNPTHPLVSGLRKAREQGVTEESLKETAELLYGMALLAEGGELADPSHFTRILAERLARTL.

Residues 1 to 342 (MSSETLEFQA…AHDLSLNISR (342 aa)) form an a; substrate-binding region. The tract at residues 343–558 (ELLQQDRQIQ…AHDVTPTLEK (216 aa)) is b. Residues 559–636 (MYRAMGHEVP…ILAERLARTL (78 aa)) form a c region.

This sequence belongs to the heat shock protein 90 family. Homodimer.

It is found in the cytoplasm. In terms of biological role, molecular chaperone. Has ATPase activity. The polypeptide is Chaperone protein HtpG (Salinispora tropica (strain ATCC BAA-916 / DSM 44818 / JCM 13857 / NBRC 105044 / CNB-440)).